Consider the following 235-residue polypeptide: MKKLSKRMAALSTKIEDRIYPPLEALSIIKENANAKFDETIEAHIRLGIDPKYTDQQLRTTVALPHGTGQSIKIAVITSGENVSKAKSAGADLFGEEDLVESINKGNMDFDLLIATPDMMPKVAKLGRVLGPRGLMPNPKAGTVTNDIANAIKEFKAGKLEFRADKAGIVHVRFGKASFTKEALFDNLKTLQESIDKNKPSGSKGKYWKSFYVTSTMGPSVQVDISAVQDYQPEG.

Belongs to the universal ribosomal protein uL1 family. Part of the 50S ribosomal subunit.

Functionally, binds directly to 23S rRNA. The L1 stalk is quite mobile in the ribosome, and is involved in E site tRNA release. Protein L1 is also a translational repressor protein, it controls the translation of the L11 operon by binding to its mRNA. The polypeptide is Large ribosomal subunit protein uL1 (Prochlorococcus marinus (strain MIT 9312)).